We begin with the raw amino-acid sequence, 945 residues long: Valine--tRNA ligase (945 aa).

Residues 42–52 (PNVTGTLHMGH) carry the 'HIGH' region motif. The 'KMSKS' region motif lies at 552-556 (KMSKS). Lys555 serves as a coordination point for ATP. The stretch at 879-945 (DKATETARLS…VQTQLSKLKD (67 aa)) forms a coiled coil.

Belongs to the class-I aminoacyl-tRNA synthetase family. ValS type 1 subfamily. Monomer.

The protein resides in the cytoplasm. It carries out the reaction tRNA(Val) + L-valine + ATP = L-valyl-tRNA(Val) + AMP + diphosphate. Functionally, catalyzes the attachment of valine to tRNA(Val). As ValRS can inadvertently accommodate and process structurally similar amino acids such as threonine, to avoid such errors, it has a 'posttransfer' editing activity that hydrolyzes mischarged Thr-tRNA(Val) in a tRNA-dependent manner. In Neisseria meningitidis serogroup A / serotype 4A (strain DSM 15465 / Z2491), this protein is Valine--tRNA ligase.